We begin with the raw amino-acid sequence, 357 residues long: DNA replication and repair protein RecF (357 aa).

30-37 serves as a coordination point for ATP; the sequence is GANGSGKT.

It belongs to the RecF family.

Its subcellular location is the cytoplasm. The RecF protein is involved in DNA metabolism; it is required for DNA replication and normal SOS inducibility. RecF binds preferentially to single-stranded, linear DNA. It also seems to bind ATP. The sequence is that of DNA replication and repair protein RecF from Citrobacter koseri (strain ATCC BAA-895 / CDC 4225-83 / SGSC4696).